The following is a 318-amino-acid chain: ADP-L-glycero-D-manno-heptose-6-epimerase (318 aa).

Residues 10-11 (FI), 31-32 (DN), Lys38, Lys53, 76-80 (QGACS), and Asn93 contribute to the NADP(+) site. Tyr141 functions as the Proton acceptor in the catalytic mechanism. Lys145 contacts NADP(+). Asn172 contacts substrate. Val173 and Lys181 together coordinate NADP(+). Lys181 serves as the catalytic Proton acceptor. Residues Arg183, His190, 204–207 (FEGS), Arg212, and Tyr276 each bind substrate.

This sequence belongs to the NAD(P)-dependent epimerase/dehydratase family. HldD subfamily. As to quaternary structure, homopentamer. The cofactor is NADP(+).

The catalysed reaction is ADP-D-glycero-beta-D-manno-heptose = ADP-L-glycero-beta-D-manno-heptose. It participates in nucleotide-sugar biosynthesis; ADP-L-glycero-beta-D-manno-heptose biosynthesis; ADP-L-glycero-beta-D-manno-heptose from D-glycero-beta-D-manno-heptose 7-phosphate: step 4/4. Functionally, catalyzes the interconversion between ADP-D-glycero-beta-D-manno-heptose and ADP-L-glycero-beta-D-manno-heptose via an epimerization at carbon 6 of the heptose. This chain is ADP-L-glycero-D-manno-heptose-6-epimerase, found in Brachyspira hyodysenteriae (strain ATCC 49526 / WA1).